Reading from the N-terminus, the 62-residue chain is Large ribosomal subunit protein bL28 (62 aa).

It belongs to the bacterial ribosomal protein bL28 family.

The polypeptide is Large ribosomal subunit protein bL28 (Streptococcus mutans serotype c (strain ATCC 700610 / UA159)).